We begin with the raw amino-acid sequence, 71 residues long: Arrestin-D (71 aa).

This sequence belongs to the arrestin family. Adrenal, cerebral cortex, heart, liver, lung, pituitary and testis.

In Rattus norvegicus (Rat), this protein is Arrestin-D (Dar).